We begin with the raw amino-acid sequence, 253 residues long: MATAKTIDLTGRTVGEIELPAVFDADYRPDLIKKAVLAAQANRLQPYGPSLYAGMKTSATGWGSGRGVSHVPRLKNSSRAARVPHAKGGRRAHPPKPEADRSEKVNTKERRYAIRSAIAATIDPTLVNLRGHIFEAELPIVAVNDLENLERTKQVIEFLEAAGLYEDVLRAKYGRHIRAGRGKLRGRKYKHKKSVLIVAGENSPILKAARNLSGVDVVTVDSLNAELLAPGTHAGRLTVWTESAIGKLEGAFQ.

A disordered region spans residues 62–107 (WGSGRGVSHVPRLKNSSRAARVPHAKGGRRAHPPKPEADRSEKVNT). Over residues 82 to 94 (RVPHAKGGRRAHP) the composition is skewed to basic residues. Residues 95 to 107 (PKPEADRSEKVNT) show a composition bias toward basic and acidic residues.

It belongs to the universal ribosomal protein uL4 family. Part of the 50S ribosomal subunit.

One of the primary rRNA binding proteins, this protein initially binds near the 5'-end of the 23S rRNA. It is important during the early stages of 50S assembly. It makes multiple contacts with different domains of the 23S rRNA in the assembled 50S subunit and ribosome. Functionally, forms part of the polypeptide exit tunnel. The protein is Large ribosomal subunit protein uL4 of Methanosarcina mazei (strain ATCC BAA-159 / DSM 3647 / Goe1 / Go1 / JCM 11833 / OCM 88) (Methanosarcina frisia).